The following is a 599-amino-acid chain: Elongation factor 4 (599 aa).

A tr-type G domain is found at 2 to 184 (KNIRNFSIIA…RLVRDIPPPQ (183 aa)). Residues 14-19 (DHGKST) and 131-134 (NKID) contribute to the GTP site.

It belongs to the TRAFAC class translation factor GTPase superfamily. Classic translation factor GTPase family. LepA subfamily.

The protein resides in the cell inner membrane. The enzyme catalyses GTP + H2O = GDP + phosphate + H(+). Functionally, required for accurate and efficient protein synthesis under certain stress conditions. May act as a fidelity factor of the translation reaction, by catalyzing a one-codon backward translocation of tRNAs on improperly translocated ribosomes. Back-translocation proceeds from a post-translocation (POST) complex to a pre-translocation (PRE) complex, thus giving elongation factor G a second chance to translocate the tRNAs correctly. Binds to ribosomes in a GTP-dependent manner. The chain is Elongation factor 4 from Salmonella gallinarum (strain 287/91 / NCTC 13346).